The primary structure comprises 214 residues: Adenylate kinase (214 aa).

10–15 serves as a coordination point for ATP; the sequence is GGGKGT. The tract at residues 30-59 is NMP; the sequence is STGDMFRENVKGGTELGLKAKEYMDAGQLV. AMP-binding positions include Thr-31, Arg-36, 57–59, 85–88, and Gln-92; these read QLV and GFPR. The interval 126-163 is LID; that stretch reads GRRVCRVCGATFHVLFNAPKEDGKCDKCGGELYQRSDD. ATP is bound at residue Arg-127. Positions 130 and 133 each coordinate Zn(2+). ATP is bound at residue 136-137; sequence TF. Cys-150 and Cys-153 together coordinate Zn(2+). Residues Arg-160 and Arg-171 each coordinate AMP. Gln-199 serves as a coordination point for ATP.

The protein belongs to the adenylate kinase family. In terms of assembly, monomer.

It is found in the cytoplasm. It catalyses the reaction AMP + ATP = 2 ADP. Its pathway is purine metabolism; AMP biosynthesis via salvage pathway; AMP from ADP: step 1/1. In terms of biological role, catalyzes the reversible transfer of the terminal phosphate group between ATP and AMP. Plays an important role in cellular energy homeostasis and in adenine nucleotide metabolism. This chain is Adenylate kinase, found in Desulforudis audaxviator (strain MP104C).